The primary structure comprises 278 residues: Outer spore wall protein 1 (278 aa).

It is found in the spore wall. Functionally, may be involved in a late step of spore wall assembly. The sequence is that of Outer spore wall protein 1 (OSW1) from Saccharomyces cerevisiae (strain ATCC 204508 / S288c) (Baker's yeast).